The primary structure comprises 45 residues: Pseudo-hevein (45 aa).

Positions Glu-1–Gly-43 constitute a Chitin-binding type-1 domain. 4 disulfide bridges follow: Cys-3-Cys-18, Cys-12-Cys-24, Cys-17-Cys-31, and Cys-37-Cys-41.

Its function is as follows. N-acetyl-D-glucosamine / N-acetyl-D-neuraminic acid binding lectin. Can inhibit fungal growth. The protein is Pseudo-hevein of Hevea brasiliensis (Para rubber tree).